A 333-amino-acid chain; its full sequence is MIDITLPLTDIHRHLDGNIRAQTILDLGRQFNIALPAKTLEALIPHVQVTSTEPDLVSFLTKLDWGVKVLASLDACRRVAFENIEDAARNGLHYVELRFSPGYMAMAHQLPIAGVVEAVIDGVRDGCNTFGVEARLIGIMSRTFGEAACLQELDALLAHREKITALDLAGDELGFPGSLFLSHFNRARDAGWHITVHAGEAAGPESIWQAIRELGAERIGHGVKAVEDRALMDFLAQQRIGIESCLTSNIQTSTVASLADHPLKTFLEHGVLASLNTDDPAVQGVDIIHEYHVAAPAAGLSREQIRQAQINGLEIAFLSDGEKRALREKVAAA.

H12 and H14 together coordinate Zn(2+). H14, D16, and G170 together coordinate substrate. H197 contributes to the Zn(2+) binding site. The Proton donor role is filled by E200. D278 serves as a coordination point for Zn(2+). D279 lines the substrate pocket.

This sequence belongs to the metallo-dependent hydrolases superfamily. Adenosine and AMP deaminases family. Adenosine deaminase subfamily. Requires Zn(2+) as cofactor.

It catalyses the reaction adenosine + H2O + H(+) = inosine + NH4(+). It carries out the reaction 2'-deoxyadenosine + H2O + H(+) = 2'-deoxyinosine + NH4(+). In terms of biological role, catalyzes the hydrolytic deamination of adenosine and 2-deoxyadenosine. The polypeptide is Adenosine deaminase (Salmonella paratyphi C (strain RKS4594)).